The following is a 305-amino-acid chain: UDP-3-O-acyl-N-acetylglucosamine deacetylase (305 aa).

Residues His-78, His-237, and Asp-241 each coordinate Zn(2+). His-264 acts as the Proton donor in catalysis.

Belongs to the LpxC family. Requires Zn(2+) as cofactor.

The catalysed reaction is a UDP-3-O-[(3R)-3-hydroxyacyl]-N-acetyl-alpha-D-glucosamine + H2O = a UDP-3-O-[(3R)-3-hydroxyacyl]-alpha-D-glucosamine + acetate. Its pathway is glycolipid biosynthesis; lipid IV(A) biosynthesis; lipid IV(A) from (3R)-3-hydroxytetradecanoyl-[acyl-carrier-protein] and UDP-N-acetyl-alpha-D-glucosamine: step 2/6. Functionally, catalyzes the hydrolysis of UDP-3-O-myristoyl-N-acetylglucosamine to form UDP-3-O-myristoylglucosamine and acetate, the committed step in lipid A biosynthesis. This is UDP-3-O-acyl-N-acetylglucosamine deacetylase from Burkholderia pseudomallei (strain 668).